Consider the following 346-residue polypeptide: G-protein coupled receptor 42 (346 aa).

The Extracellular portion of the chain corresponds to Met-1–Ser-19. A helical transmembrane segment spans residues Val-20–Val-40. At Gly-41–Pro-47 the chain is on the cytoplasmic side. The chain crosses the membrane as a helical span at residues Val-48–Leu-68. At Pro-69–Leu-90 the chain is on the extracellular side. Residues Ser-91–Ile-111 traverse the membrane as a helical segment. Residues Glu-112–Ala-132 lie on the Cytoplasmic side of the membrane. Residues Gly-133–Ile-153 form a helical membrane-spanning segment. Over Glu-154 to Leu-178 the chain is Extracellular. Asn-166 is a glycosylation site (N-linked (GlcNAc...) asparagine). The chain crosses the membrane as a helical span at residues Ala-179–Ile-199. The Cytoplasmic portion of the chain corresponds to Thr-200 to Arg-222. Residues Val-223 to Val-243 form a helical membrane-spanning segment. The Extracellular segment spans residues Ser-244–Arg-258. Residues Ile-259 to Ser-279 form a helical membrane-spanning segment. Topologically, residues Ser-280 to Asn-346 are cytoplasmic. Residues Met-307 to Glu-330 are compositionally biased toward basic and acidic residues. The tract at residues Met-307 to Asn-346 is disordered.

Belongs to the G-protein coupled receptor 1 family.

The protein localises to the cell membrane. Functionally, g protein-coupled receptor that is activated by short chain fatty acids (SCFAs), such as propionate. Hence may play a role in the regulation of whole-body energy homeostasis and/or in intestinal immunity. The sequence is that of G-protein coupled receptor 42 (GPR42) from Homo sapiens (Human).